The sequence spans 274 residues: Rhamnulose-1-phosphate aldolase (274 aa).

Residue E117 is part of the active site. Residues H141, H143, and H212 each contribute to the Zn(2+) site.

This sequence belongs to the aldolase class II family. RhaD subfamily. As to quaternary structure, homotetramer. Requires Zn(2+) as cofactor.

Its subcellular location is the cytoplasm. It carries out the reaction L-rhamnulose 1-phosphate = (S)-lactaldehyde + dihydroxyacetone phosphate. It functions in the pathway carbohydrate degradation; L-rhamnose degradation; glycerone phosphate from L-rhamnose: step 3/3. Its function is as follows. Catalyzes the reversible cleavage of L-rhamnulose-1-phosphate to dihydroxyacetone phosphate (DHAP) and L-lactaldehyde. This Escherichia coli O127:H6 (strain E2348/69 / EPEC) protein is Rhamnulose-1-phosphate aldolase.